Reading from the N-terminus, the 150-residue chain is Peptide methionine sulfoxide reductase MsrB (150 aa).

Positions 9 to 132 constitute a MsrB domain; that stretch reads EAELKRTLTK…NSAALKFIPF (124 aa). Cys-121 acts as the Nucleophile in catalysis.

This sequence belongs to the MsrB Met sulfoxide reductase family.

The catalysed reaction is L-methionyl-[protein] + [thioredoxin]-disulfide + H2O = L-methionyl-(R)-S-oxide-[protein] + [thioredoxin]-dithiol. The chain is Peptide methionine sulfoxide reductase MsrB from Mycoplasma genitalium (strain ATCC 33530 / DSM 19775 / NCTC 10195 / G37) (Mycoplasmoides genitalium).